Consider the following 337-residue polypeptide: Transcription factor HBI1 (337 aa).

The segment at 119 to 180 (VALKNKRKPE…SKGASENQKL (62 aa)) is disordered. Basic and acidic residues predominate over residues 126–151 (KPEVKTREEQKTEKKIKVEAETESSM). Positions 152 to 165 (KGKSNMGNTEASSD) are enriched in polar residues. The bHLH domain maps to 191–241 (QATDRHSLAERARREKISKKMKYLQDIVPGCNKVTGKAGMLDEIINYVQCL).

In terms of assembly, homodimer. Interacts with IBH1. As to expression, highly expressed in hypocotyls and cotyledons. Expressed in leaves, stems, and flowers.

Its subcellular location is the nucleus. Atypical bHLH transcription factor that acts as a positive regulator of cell elongation downstream of multiple external and endogenous signals by direct binding to the promoters and activation of the two expansin genes EXPA1 and EXPA8, encoding cell wall loosening enzymes. Transcriptional activity is inhibited when binding to the bHLH transcription factor IBH1. The sequence is that of Transcription factor HBI1 (HBI1) from Arabidopsis thaliana (Mouse-ear cress).